A 294-amino-acid polypeptide reads, in one-letter code: Tyrosine-protein phosphatase (294 aa).

A signal peptide spans M1 to A24. The active-site Phosphocysteine intermediate is C182. Composition is skewed to basic and acidic residues over residues Q221–H231 and P238–H247. Residues Q221–A252 form a disordered region.

It belongs to the protein-tyrosine phosphatase family. Monomer.

It carries out the reaction O-phospho-L-tyrosyl-[protein] + H2O = L-tyrosyl-[protein] + phosphate. In Nostoc commune, this protein is Tyrosine-protein phosphatase (iphP).